The sequence spans 196 residues: Calcium channel flower (196 aa).

A run of 3 helical transmembrane segments spans residues 35-55 (LGIV…LSII), 70-92 (LAGF…QVGS), and 113-133 (AVPP…GLIF).

This sequence belongs to the calcium channel flower family. Homomultimer. Associates with the dally/ magu complex.

It is found in the cell membrane. It localises to the cytoplasmic vesicle. Its subcellular location is the secretory vesicle. The protein localises to the synaptic vesicle membrane. The protein resides in the presynaptic cell membrane. It is found in the endosome. Channel activity is inhibited by La(3+), which reduces Ca(2+) influx and thus inhibits it's function in promoting activity-dependent bulk endocytosis (ADBE) in response to high stimuli. Transmembrane protein which mediates synaptic endocytosis, fitness-based cell culling, neuronal culling, morphogen gradient scaling, and calcium transport. Regulates synaptic endocytosis and hence couples exo- with endocytosis. Controls two major modes of synaptic vesicle (SV) endocytosis in the synaptic boutons of neuromuscular junctions (NMJs); Ca(2+) channel-independent Clathrin-mediated endocytosis (CME) in response to mild stimulation, and Ca(2+) channel-dependent activity-dependent bulk endocytosis (ADBE) in response to strong stimulation. Functions in ADBE and subsequent SV reformation from bulk endosomes by initiating Ca(2+) channel-dependent phosphatidylinositol 4,5-bisphosphate (PtdIns(4,5)P2) compartmentalization in synaptic boutons. There it acts at the periactive zone to provide the low Ca(2+) levels required to initiate Calcineurin activation and upregulate PtdIns(4,5)P2. Conversely PtdIns(4,5)P2 enhances fwe Ca(2+) channel-activity, establishing a positive feedback loop that induces PtdIns(4,5)P2 microdomain at the periactive zone. These microdomains trigger bulk membrane invagination (i.e. ADBE) by triggering actin polymerization while also promoting localization of fwe to bulk endosomes, thereby removing the ADBE trigger to reduce endocytosis and prevent excess membrane uptake. PtdIns(4,5)P2 then promotes SV reformation from the bulk endosomes, to coordinate ADBE and subsequent SV reformation. Different combinations of the flower isoforms at the cell membrane are also required for the identification and elimination of suboptimal or supernumerary cells during development, regeneration, and adulthood. Required for the recognition and elimination of unfit cells in the developing wing during cell competition. In the developing pupal retina, mediates the elimination of unwanted postmitotic neurons, including supernumerary photoreceptor neurons that form at the periphery of the retina and are contained within incomplete ommatidia units. Also required for efficient elimination and replacement of old neurons by newly generated neurons during regeneration in the adult brain following mechanical injury. Downstream of the flower fitness fingerprints, cells identified as unwanted or unfit are eliminated via apoptosis through the expression of ahuizotl (azot). However, the cells marked for elimination by the flower isoforms only undergo apoptosis if additional thresholds are met; (1) their neighboring fit/healthy cells express different levels of the fwe isoforms, and (2) the levels of the protective signal SPARC expressed by the loser or unwanted cells are unable to inhibit caspase activation. These additional thresholds for flower-mediated apoptosis, allows useful cells to recover from transient and limited stress before they are unnecessarily eliminated. Functions with dally and magu in a mechanism of scaling, which utilises apoptosis to ensure that the dpp morphogen gradient, which mediates organ growth, remains proportional to the size of the growing wing. In this mechanism, fwe represses dally- and Magu-dependent activity in expanding the gradient, and dally/Magu inhibits fwe-dependent apoptosis to keep cell death rate low. When the levels of these different proteins are optimally regulated the gradient correctly scales with organ growth but when this fails, fwe-mediated apoptosis is activated to trim the developing tissue to match the correct size of the gradient. This chain is Calcium channel flower, found in Drosophila grimshawi (Hawaiian fruit fly).